A 403-amino-acid polypeptide reads, in one-letter code: D-mannonate dehydratase (403 aa).

The substrate site is built by asparagine 38 and histidine 123. Tyrosine 160 (proton donor/acceptor) is an active-site residue. Residue aspartate 211 coordinates Mg(2+). The active-site Proton donor/acceptor is the histidine 213. Mg(2+) contacts are provided by glutamate 237 and glutamate 263. Glutamate 263, arginine 284, histidine 313, aspartate 317, and glutamate 340 together coordinate substrate.

This sequence belongs to the mandelate racemase/muconate lactonizing enzyme family. GalD subfamily. The cofactor is Mg(2+).

It catalyses the reaction D-mannonate = 2-dehydro-3-deoxy-D-gluconate + H2O. The protein operates within carbohydrate metabolism; pentose and glucuronate interconversion. Its function is as follows. Catalyzes the dehydration of D-mannonate. Has no detectable activity with a panel of 70 other acid sugars (in vitro). The chain is D-mannonate dehydratase from Sphingomonas sp. (strain SKA58).